Here is a 486-residue protein sequence, read N- to C-terminus: 23S rRNA (uracil(1939)-C(5))-methyltransferase RlmD (486 aa).

One can recognise a TRAM domain in the interval 14–76; that stretch reads AAQDGSGLPE…NHWEQANLTA (63 aa). Residues C89, C99, C102, and C181 each contribute to the [4Fe-4S] cluster site. S-adenosyl-L-methionine is bound by residues Q289, F318, N323, E339, N374, and D395. The active-site Nucleophile is C442.

This sequence belongs to the class I-like SAM-binding methyltransferase superfamily. RNA M5U methyltransferase family. RlmD subfamily.

It catalyses the reaction uridine(1939) in 23S rRNA + S-adenosyl-L-methionine = 5-methyluridine(1939) in 23S rRNA + S-adenosyl-L-homocysteine + H(+). Functionally, catalyzes the formation of 5-methyl-uridine at position 1939 (m5U1939) in 23S rRNA. This chain is 23S rRNA (uracil(1939)-C(5))-methyltransferase RlmD, found in Verminephrobacter eiseniae (strain EF01-2).